The chain runs to 144 residues: Large ribosomal subunit protein uL14 (144 aa).

This sequence belongs to the universal ribosomal protein uL14 family. As to quaternary structure, part of the 50S ribosomal subunit. Forms a cluster with proteins L3 and L24e, part of which may contact the 16S rRNA in 2 intersubunit bridges.

Binds to 23S rRNA. Forms part of two intersubunit bridges in the 70S ribosome. This is Large ribosomal subunit protein uL14 from Pyrobaculum arsenaticum (strain DSM 13514 / JCM 11321 / PZ6).